The chain runs to 963 residues: IQ motif and SEC7 domain-containing protein 1 (963 aa).

The disordered stretch occupies residues 21 to 88 (SGVEGEAPSS…TRRPKLQHST (68 aa)). A compositionally biased stretch (polar residues) spans 29 to 38 (SSETGTSLDS). Phosphoserine occurs at positions 89, 105, and 107. One can recognise an IQ domain in the interval 134 to 163 (TRHAARTIQTAFRQYQMNKNFERLRSSMSE). Residues S180, S249, and S253 each carry the phosphoserine modification. Disordered regions lie at residues 312–332 (LSPPLPLSQAGDRPSSTESDL) and 349–513 (KEDK…RNSW). 2 stretches are compositionally biased toward basic and acidic residues: residues 366-376 (ERQEQRLRVEH) and 430-446 (LPREEPELRPRPPRPLD). The segment covering 471–489 (DSINSTSNSNDTINCSSES) has biased composition (low complexity). Phosphoserine is present on residues S512 and S515. In terms of domain architecture, SEC7 spans 517–710 (AFSNDVIRKR…MGIYERIRKR (194 aa)). One can recognise a PH domain in the interval 774 to 866 (HQREIFLFND…LRESIAEVQE (93 aa)). Residues 848 to 879 (QDRKKFTDDLRESIAEVQEMEKHRIESELEKQ) are a coiled coil. Residue S892 is modified to Phosphoserine. Y911 is modified (phosphotyrosine). Positions 922–947 (LSSSLRDLSEAGKRGRRSSAGSLESN) are disordered. Phosphoserine is present on residues S924 and S925.

Belongs to the BRAG family. Interacts with ARF1 and ARF6. Interacts with GRIA2; the interaction is required for ARF6 activation. Expressed in brain, ovary, heart, lung, liver, kidney and leukocytes. Moderate expression was also detected in lung, skeletal muscle, placenta, small intestine, pancreas, spleen and testis.

The protein resides in the cytoplasm. The protein localises to the nucleus. Its subcellular location is the postsynaptic density. It localises to the cytoplasmic vesicle. It is found in the secretory vesicle. The protein resides in the synaptic vesicle. Functionally, guanine nucleotide exchange factor for ARF1 and ARF6. Guanine nucleotide exchange factor activity is enhanced by lipid binding. Accelerates GTP binding by ARFs of all three classes. Guanine nucleotide exchange protein for ARF6, mediating internalization of beta-1 integrin. Involved in neuronal development. In neurons, plays a role in the control of vesicle formation by endocytoc cargo. Upon long term depression, interacts with GRIA2 and mediates the activation of ARF6 to internalize synaptic AMPAR receptors. This is IQ motif and SEC7 domain-containing protein 1 from Homo sapiens (Human).